The primary structure comprises 1404 residues: DNA-directed RNA polymerase subunit beta' (1404 aa).

Residues cysteine 70, cysteine 72, cysteine 85, and cysteine 88 each contribute to the Zn(2+) site. Mg(2+) is bound by residues aspartate 460, aspartate 462, and aspartate 464. Cysteine 814, cysteine 888, cysteine 895, and cysteine 898 together coordinate Zn(2+).

This sequence belongs to the RNA polymerase beta' chain family. In terms of assembly, the RNAP catalytic core consists of 2 alpha, 1 beta, 1 beta' and 1 omega subunit. When a sigma factor is associated with the core the holoenzyme is formed, which can initiate transcription. It depends on Mg(2+) as a cofactor. Requires Zn(2+) as cofactor.

It catalyses the reaction RNA(n) + a ribonucleoside 5'-triphosphate = RNA(n+1) + diphosphate. In terms of biological role, DNA-dependent RNA polymerase catalyzes the transcription of DNA into RNA using the four ribonucleoside triphosphates as substrates. The protein is DNA-directed RNA polymerase subunit beta' of Shewanella amazonensis (strain ATCC BAA-1098 / SB2B).